The following is a 261-amino-acid chain: uncharacterized protein (261 aa).

Glu-46 is an active-site residue.

It belongs to the PhzF family.

This is an uncharacterized protein from Pseudomonas aeruginosa (strain ATCC 15692 / DSM 22644 / CIP 104116 / JCM 14847 / LMG 12228 / 1C / PRS 101 / PAO1).